Consider the following 322-residue polypeptide: Ribonucleoside-diphosphate reductase small subunit (322 aa).

The Fe cation site is built by D70, E101, and H104. The active site involves Y108. Positions 163, 197, and 200 each coordinate Fe cation.

This sequence belongs to the ribonucleoside diphosphate reductase small chain family. As to quaternary structure, heterodimer of a large and a small subunit. Requires Fe cation as cofactor.

It carries out the reaction a 2'-deoxyribonucleoside 5'-diphosphate + [thioredoxin]-disulfide + H2O = a ribonucleoside 5'-diphosphate + [thioredoxin]-dithiol. Its function is as follows. Provides the precursors necessary for DNA synthesis. Catalyzes the biosynthesis of deoxyribonucleotides from the corresponding ribonucleotides. The protein is Ribonucleoside-diphosphate reductase small subunit (RNR2) of Plasmodium falciparum (isolate FCR-3 / Gambia).